The sequence spans 300 residues: MNQESSFRAPPKRRVRGPNPNISTPHQLFDDTSGGPVPHGGEYPNHSSPALGIPAQAFLSEPMSNFAMAYGSSLASQGKEMMDKNIDRIIPVSKIKYYFAVDTVYVGKKIGLLMFPYMHQDWEVRYQQDTPVAPRFDINAPDLYIPVMAFITYILVAGLALGTQSRFSPEILGMQASSALAWLIVEVLAILLSLYLVTVNTDLTTVDLVAFSGYKYVGMISGVISGLLFGKTGYYVVLSWCGISVVFFMIRTLRLKILSEAAAEGVLVRGARNQLRMYLTMAIAAVQPIFMYWLTYHLVR.

A disordered region spans residues 1 to 46; sequence MNQESSFRAPPKRRVRGPNPNISTPHQLFDDTSGGPVPHGGEYPNH. Residues 1-142 lie on the Cytoplasmic side of the membrane; it reads MNQESSFRAP…APRFDINAPD (142 aa). The helical transmembrane segment at 143–163 threads the bilayer; that stretch reads LYIPVMAFITYILVAGLALGT. Topologically, residues 164 to 178 are extracellular; sequence QSRFSPEILGMQASS. A helical membrane pass occupies residues 179–199; the sequence is ALAWLIVEVLAILLSLYLVTV. Residues 200-205 are Cytoplasmic-facing; sequence NTDLTT. The helical transmembrane segment at 206–226 threads the bilayer; that stretch reads VDLVAFSGYKYVGMISGVISG. Residue Leu227 is a topological domain, extracellular. The chain crosses the membrane as a helical span at residues 228–248; sequence LFGKTGYYVVLSWCGISVVFF. Topologically, residues 249–278 are cytoplasmic; sequence MIRTLRLKILSEAAAEGVLVRGARNQLRMY. Residues 279 to 299 form a helical membrane-spanning segment; it reads LTMAIAAVQPIFMYWLTYHLV. A topological domain (extracellular) is located at residue Arg300.

This sequence belongs to the YIF1 family.

The protein resides in the endoplasmic reticulum membrane. Its subcellular location is the golgi apparatus membrane. It localises to the endoplasmic reticulum-Golgi intermediate compartment membrane. In terms of biological role, functions in endoplasmic reticulum to Golgi vesicle-mediated transport and regulates the proper organization of the endoplasmic reticulum and the Golgi. Plays a key role in targeting to neuronal dendrites receptors such as HTR1A. Plays also a role in primary cilium and sperm flagellum assembly probably through protein transport to these compartments. The polypeptide is Protein YIF1B (yif1b) (Xenopus tropicalis (Western clawed frog)).